The following is a 432-amino-acid chain: Probable imidazolonepropionase (432 aa).

The 4-imidazolone-5-propanoate site is built by Tyr-159 and His-192. Tyr-159 is a binding site for N-formimidoyl-L-glutamate. His-260 lines the Fe(3+) pocket. His-260 contacts Zn(2+). Glu-263 lines the 4-imidazolone-5-propanoate pocket. Fe(3+) is bound at residue Asp-334. Asp-334 contributes to the Zn(2+) binding site. Asn-336 lines the N-formimidoyl-L-glutamate pocket.

The protein belongs to the metallo-dependent hydrolases superfamily. HutI family. Zn(2+) serves as cofactor. Fe(3+) is required as a cofactor.

It carries out the reaction 4-imidazolone-5-propanoate + H2O = N-formimidoyl-L-glutamate. Its pathway is amino-acid degradation; L-histidine degradation into L-glutamate; N-formimidoyl-L-glutamate from L-histidine: step 3/3. In Xenopus tropicalis (Western clawed frog), this protein is Probable imidazolonepropionase (amdhd1).